A 637-amino-acid chain; its full sequence is Biosynthetic arginine decarboxylase (637 aa).

Position 101 is an N6-(pyridoxal phosphate)lysine (Lys-101). 286–296 (FDVGGGLAVDY) is a substrate binding site.

Belongs to the Orn/Lys/Arg decarboxylase class-II family. SpeA subfamily. Mg(2+) is required as a cofactor. Pyridoxal 5'-phosphate serves as cofactor.

The catalysed reaction is L-arginine + H(+) = agmatine + CO2. It functions in the pathway amine and polyamine biosynthesis; agmatine biosynthesis; agmatine from L-arginine: step 1/1. Catalyzes the biosynthesis of agmatine from arginine. The chain is Biosynthetic arginine decarboxylase from Shewanella woodyi (strain ATCC 51908 / MS32).